Here is a 169-residue protein sequence, read N- to C-terminus: S-ribosylhomocysteine lyase (169 aa).

His-54, His-58, and Cys-128 together coordinate Fe cation.

This sequence belongs to the LuxS family. Homodimer. Fe cation serves as cofactor.

The enzyme catalyses S-(5-deoxy-D-ribos-5-yl)-L-homocysteine = (S)-4,5-dihydroxypentane-2,3-dione + L-homocysteine. In terms of biological role, involved in the synthesis of autoinducer 2 (AI-2) which is secreted by bacteria and is used to communicate both the cell density and the metabolic potential of the environment. The regulation of gene expression in response to changes in cell density is called quorum sensing. Catalyzes the transformation of S-ribosylhomocysteine (RHC) to homocysteine (HC) and 4,5-dihydroxy-2,3-pentadione (DPD). The protein is S-ribosylhomocysteine lyase of Psychromonas ingrahamii (strain DSM 17664 / CCUG 51855 / 37).